Here is a 152-residue protein sequence, read N- to C-terminus: NAD(P)H-quinone oxidoreductase subunit N (152 aa).

The protein belongs to the complex I NdhN subunit family. As to quaternary structure, NDH-1 can be composed of about 15 different subunits; different subcomplexes with different compositions have been identified which probably have different functions.

The protein resides in the cellular thylakoid membrane. The catalysed reaction is a plastoquinone + NADH + (n+1) H(+)(in) = a plastoquinol + NAD(+) + n H(+)(out). The enzyme catalyses a plastoquinone + NADPH + (n+1) H(+)(in) = a plastoquinol + NADP(+) + n H(+)(out). In terms of biological role, NDH-1 shuttles electrons from an unknown electron donor, via FMN and iron-sulfur (Fe-S) centers, to quinones in the respiratory and/or the photosynthetic chain. The immediate electron acceptor for the enzyme in this species is believed to be plastoquinone. Couples the redox reaction to proton translocation, and thus conserves the redox energy in a proton gradient. Cyanobacterial NDH-1 also plays a role in inorganic carbon-concentration. In Prochlorococcus marinus (strain SARG / CCMP1375 / SS120), this protein is NAD(P)H-quinone oxidoreductase subunit N.